The sequence spans 242 residues: 2-amino-5-formylamino-6-ribosylaminopyrimidin-4(3H)-one 5'-monophosphate deformylase (242 aa).

Fe cation-binding residues include Glu-46, His-48, Asp-57, and His-125.

This sequence belongs to the creatininase superfamily. FAPy deformylase family. In terms of assembly, homodimer. It depends on Fe(2+) as a cofactor. Zn(2+) serves as cofactor.

The enzyme catalyses 2-amino-5-formylamino-6-(5-phospho-D-ribosylamino)pyrimidin-4(3H)-one + H2O = 2,5-diamino-6-(1-D-ribosylamino)pyrimidin-4(3H)-one 5'-phosphate + formate + H(+). Its pathway is cofactor biosynthesis; coenzyme F420 biosynthesis. It participates in cofactor biosynthesis; riboflavin biosynthesis. In terms of biological role, catalyzes the hydrolysis of the formamide of 2-amino-5-formylamino-6-ribosylamino-4(3H)-pyrimidinone 5'-monophosphate (FAPy) to form 2,5-diamino-6-ribosylamino-4(3H)-pyrimidinone 5'-phosphate (APy). The chain is 2-amino-5-formylamino-6-ribosylaminopyrimidin-4(3H)-one 5'-monophosphate deformylase from Methanococcus aeolicus (strain ATCC BAA-1280 / DSM 17508 / OCM 812 / Nankai-3).